We begin with the raw amino-acid sequence, 350 residues long: MAFKLASSPHLSTKAQTRGLMFKVMLCALPGALAQCYFFGWGTLIQIALAIAIAVATEAAVLKLRARPVGKTIRDNSAALTGLLIGVAIPALAPWWIAAIGVIFAILVVKQLYGGLGNNIFNPAMAAYVMLLISFPMQMTTWVAPSGAALHDLGLMQSLSVIFQGADAEQVLAYRAGIDGVTMATPLDAVKTGLSTGLTLDEILTKASFSDGFGIGWALINLAYLAGGLVMLKLKLIRWQISTAILASLFVCASIGYLLSPDTHMGPLLHLFSGATMLAAFFIATDPVTAATSTRGRLIFGSLIGLLVYLIRSFCGYPDAFAFAVLLANLCAPFIDYYVKPRAYGHRASR.

The next 3 membrane-spanning stretches (helical) occupy residues 36–56 (CYFF…IAVA), 89–109 (IPAL…ILVV), and 124–144 (AMAA…TWVA). At T185 the chain carries FMN phosphoryl threonine. 5 helical membrane-spanning segments follow: residues 212 to 232 (GFGI…LVML), 239 to 259 (WQIS…GYLL), 265 to 285 (MGPL…FIAT), 298 to 318 (LIFG…CGYP), and 319 to 339 (DAFA…DYYV).

Belongs to the NqrB/RnfD family. The complex is composed of six subunits: RnfA, RnfB, RnfC, RnfD, RnfE and RnfG. FMN is required as a cofactor.

The protein localises to the cell inner membrane. Its function is as follows. Part of a membrane-bound complex that couples electron transfer with translocation of ions across the membrane. The chain is Ion-translocating oxidoreductase complex subunit D from Shewanella loihica (strain ATCC BAA-1088 / PV-4).